Consider the following 216-residue polypeptide: Small ribosomal subunit protein uS3c (216 aa).

One can recognise a KH type-2 domain in the interval 43–115 (FENDWGTLYN…QTRIKVIQVN (73 aa)).

Belongs to the universal ribosomal protein uS3 family. Part of the 30S ribosomal subunit.

The protein resides in the plastid. It is found in the chloroplast. The sequence is that of Small ribosomal subunit protein uS3c (rps3) from Emiliania huxleyi (Coccolithophore).